Here is a 925-residue protein sequence, read N- to C-terminus: Protein translocase subunit SecA (925 aa).

ATP-binding positions include glutamine 87, 105–109, and aspartate 515; that span reads GEGKT. Zn(2+) is bound by residues cysteine 909, cysteine 911, cysteine 920, and histidine 921.

Belongs to the SecA family. In terms of assembly, monomer and homodimer. Part of the essential Sec protein translocation apparatus which comprises SecA, SecYEG and auxiliary proteins SecDF-YajC and YidC. Zn(2+) is required as a cofactor.

It localises to the cell inner membrane. It is found in the cytoplasm. The enzyme catalyses ATP + H2O + cellular proteinSide 1 = ADP + phosphate + cellular proteinSide 2.. Functionally, part of the Sec protein translocase complex. Interacts with the SecYEG preprotein conducting channel. Has a central role in coupling the hydrolysis of ATP to the transfer of proteins into and across the cell membrane, serving both as a receptor for the preprotein-SecB complex and as an ATP-driven molecular motor driving the stepwise translocation of polypeptide chains across the membrane. This is Protein translocase subunit SecA from Cupriavidus necator (strain ATCC 17699 / DSM 428 / KCTC 22496 / NCIMB 10442 / H16 / Stanier 337) (Ralstonia eutropha).